Here is a 640-residue protein sequence, read N- to C-terminus: Dextranase (640 aa).

An N-terminal signal peptide occupies residues 1-32 (MPGTGLGRLAKRMTAAAAVFFISTSAVLPAQA). Positions 33-49 (ATAPAAAPPGVPAALKA) are excised as a propeptide. Residues 248–269 (EQKERLVPTEESGSIHYPEPGE) form a disordered region.

Belongs to the glycosyl hydrolase 49 family.

The protein resides in the secreted. The enzyme catalyses Endohydrolysis of (1-&gt;6)-alpha-D-glucosidic linkages in dextran.. Efficiently decomposes water-insoluble glucan as well as dextran. This Arthrobacter sp. (strain CB-8) protein is Dextranase.